The chain runs to 88 residues: Pigment dispersing factor homolog pdf-1 (88 aa).

The N-terminal stretch at 1-21 is a signal peptide; sequence MNRFIISMIALLAVFCAVSTA.

The protein localises to the secreted. Probable ligand of isoforms a and b of the calcitonin receptor-like protein, pdfr-1, a G-protein coupled receptor. May not signal through isoform c of pdfr-1. Involved in locomotion; more specifically mate searching behavior of males, independent of nutritional status. Involved in regulating the male-specific expression of TGFbeta-like daf-7 in the ASJ chemosensory neurons. Plays a role in circadian rhythms of locomotor activity. Involved in mediating arousal from the sleep-like state called lethargus, which occurs during molting between larval and adult stages, in part by regulating touch sensitivity, and working in concert with neuropeptide flp-2. In the presence of food, plays a role in initiating and extending exploratory roaming behavior, in opposition to 5-hydroxytryptamine (serotonin) signaling. This chain is Pigment dispersing factor homolog pdf-1, found in Caenorhabditis elegans.